Reading from the N-terminus, the 304-residue chain is Dihydroorotate dehydrogenase B (NAD(+)), catalytic subunit (304 aa).

FMN contacts are provided by residues S21 and 45–46; that span reads KA. Substrate contacts are provided by residues K45 and 69–73; that span reads NAIGL. Residues N99 and N127 each coordinate FMN. Residue N127 participates in substrate binding. C130 (nucleophile) is an active-site residue. K165 and I191 together coordinate FMN. A substrate-binding site is contributed by 192 to 193; it reads NT. Residues G217, 243–244, and 265–266 each bind FMN; these read GG and GT.

The protein belongs to the dihydroorotate dehydrogenase family. Type 1 subfamily. As to quaternary structure, heterotetramer of 2 PyrK and 2 PyrD type B subunits. It depends on FMN as a cofactor.

It localises to the cytoplasm. It carries out the reaction (S)-dihydroorotate + NAD(+) = orotate + NADH + H(+). It participates in pyrimidine metabolism; UMP biosynthesis via de novo pathway; orotate from (S)-dihydroorotate (NAD(+) route): step 1/1. Functionally, catalyzes the conversion of dihydroorotate to orotate with NAD(+) as electron acceptor. This is Dihydroorotate dehydrogenase B (NAD(+)), catalytic subunit (pyrD) from Listeria monocytogenes serovar 1/2a (strain ATCC BAA-679 / EGD-e).